Reading from the N-terminus, the 340-residue chain is Nucleoid-associated protein PSPA7_4451 (340 aa).

Belongs to the YejK family.

It is found in the cytoplasm. Its subcellular location is the nucleoid. The polypeptide is Nucleoid-associated protein PSPA7_4451 (Pseudomonas paraeruginosa (strain DSM 24068 / PA7) (Pseudomonas aeruginosa (strain PA7))).